A 647-amino-acid polypeptide reads, in one-letter code: Denticleless protein homolog (647 aa).

WD repeat units follow at residues 48–88, 95–134, 137–177, 209–248, 264–303, 308–349, and 353–393; these read AAAV…KQSS, AHDN…LLGT, GHQC…KDGF, DSQQ…TAYH, TRKL…TTPV, GHSN…QAPM, and GHSQ…EGEN. 2 short sequence motifs (DDB1-binding motif) span residues 167 to 170 and 238 to 241; these read WDTR and WDLR. 2 disordered regions span residues 410–487 and 534–647; these read QSPN…SKSP and KRSR…RTQD. Composition is skewed to polar residues over residues 426–443 and 471–486; these read PSKN…SPQP and KMPS…SSKS. The span at 543-558 shows a compositional bias: basic and acidic residues; that stretch reads LKKEDSFGLESEKRLG. Residues 586–600 show a composition bias toward low complexity; sequence KGSAQPKSPSSGSSQ.

This sequence belongs to the WD repeat cdt2 family. In terms of assembly, component of the DCX(DTL) E3 ubiquitin ligase complex, at least composed of cul4 (cul4a or cul4b), ddb1, dtl/cdt2 and rbx1.

The protein resides in the nucleus. It is found in the cytoplasm. It localises to the cytoskeleton. The protein localises to the microtubule organizing center. Its subcellular location is the centrosome. The protein resides in the chromosome. The protein operates within protein modification; protein ubiquitination. Functionally, substrate-specific adapter of a DCX (DDB1-CUL4-X-box) E3 ubiquitin-protein ligase complex required for cell cycle control, DNA damage response and translesion DNA synthesis. The DCX(DTL) complex, also named CRL4(CDT2) complex, mediates the polyubiquitination and subsequent degradation of CDT1, CDKN1A/p21(CIP1), KMT5A and SDE2. CDT1 degradation in response to DNA damage is necessary to ensure proper cell cycle regulation of DNA replication. CDKN1A/p21(CIP1) degradation during S phase or following UV irradiation is essential to control replication licensing. KMT5A degradation is also important for a proper regulation of mechanisms such as TGF-beta signaling, cell cycle progression, DNA repair and cell migration. Most substrates require their interaction with PCNA for their polyubiquitination: substrates interact with PCNA via their PIP-box, and those containing the 'K+4' motif in the PIP box, recruit the DCX(DTL) complex, leading to their degradation. In undamaged proliferating cells, the DCX(DTL) complex also promotes the 'Lys-164' monoubiquitination of PCNA, thereby being involved in PCNA-dependent translesion DNA synthesis. May play a role in the regulation of the circadian clock. In Danio rerio (Zebrafish), this protein is Denticleless protein homolog (dtl).